The chain runs to 214 residues: Thiamine-phosphate synthase (214 aa).

4-amino-2-methyl-5-(diphosphooxymethyl)pyrimidine-binding positions include 37 to 41 and Asn-73; that span reads QYREK. 2 residues coordinate Mg(2+): Asp-74 and Asp-93. 4-amino-2-methyl-5-(diphosphooxymethyl)pyrimidine is bound at residue Ser-112. A 2-[(2R,5Z)-2-carboxy-4-methylthiazol-5(2H)-ylidene]ethyl phosphate-binding site is contributed by 139–141; sequence TIS. Lys-142 lines the 4-amino-2-methyl-5-(diphosphooxymethyl)pyrimidine pocket. 2-[(2R,5Z)-2-carboxy-4-methylthiazol-5(2H)-ylidene]ethyl phosphate contacts are provided by residues Gly-171 and 191-192; that span reads IS.

This sequence belongs to the thiamine-phosphate synthase family. Mg(2+) is required as a cofactor.

The enzyme catalyses 2-[(2R,5Z)-2-carboxy-4-methylthiazol-5(2H)-ylidene]ethyl phosphate + 4-amino-2-methyl-5-(diphosphooxymethyl)pyrimidine + 2 H(+) = thiamine phosphate + CO2 + diphosphate. It carries out the reaction 2-(2-carboxy-4-methylthiazol-5-yl)ethyl phosphate + 4-amino-2-methyl-5-(diphosphooxymethyl)pyrimidine + 2 H(+) = thiamine phosphate + CO2 + diphosphate. It catalyses the reaction 4-methyl-5-(2-phosphooxyethyl)-thiazole + 4-amino-2-methyl-5-(diphosphooxymethyl)pyrimidine + H(+) = thiamine phosphate + diphosphate. Its pathway is cofactor biosynthesis; thiamine diphosphate biosynthesis; thiamine phosphate from 4-amino-2-methyl-5-diphosphomethylpyrimidine and 4-methyl-5-(2-phosphoethyl)-thiazole: step 1/1. In terms of biological role, condenses 4-methyl-5-(beta-hydroxyethyl)thiazole monophosphate (THZ-P) and 2-methyl-4-amino-5-hydroxymethyl pyrimidine pyrophosphate (HMP-PP) to form thiamine monophosphate (TMP). The polypeptide is Thiamine-phosphate synthase (Listeria monocytogenes serotype 4b (strain CLIP80459)).